The sequence spans 526 residues: Bifunctional purine biosynthesis protein PurH (526 aa).

An MGS-like domain is found at 1–147 (MTKIERALIS…KNWAHVAIVT (147 aa)).

Belongs to the PurH family.

It carries out the reaction (6R)-10-formyltetrahydrofolate + 5-amino-1-(5-phospho-beta-D-ribosyl)imidazole-4-carboxamide = 5-formamido-1-(5-phospho-D-ribosyl)imidazole-4-carboxamide + (6S)-5,6,7,8-tetrahydrofolate. The enzyme catalyses IMP + H2O = 5-formamido-1-(5-phospho-D-ribosyl)imidazole-4-carboxamide. It participates in purine metabolism; IMP biosynthesis via de novo pathway; 5-formamido-1-(5-phospho-D-ribosyl)imidazole-4-carboxamide from 5-amino-1-(5-phospho-D-ribosyl)imidazole-4-carboxamide (10-formyl THF route): step 1/1. It functions in the pathway purine metabolism; IMP biosynthesis via de novo pathway; IMP from 5-formamido-1-(5-phospho-D-ribosyl)imidazole-4-carboxamide: step 1/1. This chain is Bifunctional purine biosynthesis protein PurH, found in Laribacter hongkongensis (strain HLHK9).